A 188-amino-acid chain; its full sequence is Methylated-DNA--protein-cysteine methyltransferase (188 aa).

DNA is bound by residues tyrosine 120, glycine 121, and arginine 134. Cysteine 151 serves as the catalytic Nucleophile; methyl group acceptor. Serine 157 is a binding site for DNA.

The protein belongs to the MGMT family.

The protein resides in the nucleus. It carries out the reaction a 6-O-methyl-2'-deoxyguanosine in DNA + L-cysteinyl-[protein] = S-methyl-L-cysteinyl-[protein] + a 2'-deoxyguanosine in DNA. The enzyme catalyses a 4-O-methyl-thymidine in DNA + L-cysteinyl-[protein] = a thymidine in DNA + S-methyl-L-cysteinyl-[protein]. Involved in the cellular defense against the biological effects of O6-methylguanine (O6-MeG) and O4-methylthymine (O4-MeT) in DNA. Repairs the methylated nucleobase in DNA by stoichiometrically transferring the methyl group to a cysteine residue in the enzyme. This is a suicide reaction: the enzyme is irreversibly inactivated. Prefers double-stranded DNA over single-stranded DNA as substrate. The polypeptide is Methylated-DNA--protein-cysteine methyltransferase (MGT1) (Saccharomyces cerevisiae (strain YJM789) (Baker's yeast)).